A 212-amino-acid chain; its full sequence is Large ribosomal subunit protein bL25 (212 aa).

The span at Met1–Lys16 shows a compositional bias: basic and acidic residues. The disordered stretch occupies residues Met1 to Leu22.

Belongs to the bacterial ribosomal protein bL25 family. CTC subfamily. In terms of assembly, part of the 50S ribosomal subunit; part of the 5S rRNA/L5/L18/L25 subcomplex. Contacts the 5S rRNA. Binds to the 5S rRNA independently of L5 and L18.

Its function is as follows. This is one of the proteins that binds to the 5S RNA in the ribosome where it forms part of the central protuberance. In Bdellovibrio bacteriovorus (strain ATCC 15356 / DSM 50701 / NCIMB 9529 / HD100), this protein is Large ribosomal subunit protein bL25.